We begin with the raw amino-acid sequence, 147 residues long: Ribosome-binding factor A (147 aa).

Residues 122–147 (QQQFGSVDDDVIENDIEESDDTEGKV) form a disordered region. A compositionally biased stretch (acidic residues) spans 128-147 (VDDDVIENDIEESDDTEGKV).

Belongs to the RbfA family. In terms of assembly, monomer. Binds 30S ribosomal subunits, but not 50S ribosomal subunits or 70S ribosomes.

It localises to the cytoplasm. In terms of biological role, one of several proteins that assist in the late maturation steps of the functional core of the 30S ribosomal subunit. Associates with free 30S ribosomal subunits (but not with 30S subunits that are part of 70S ribosomes or polysomes). Required for efficient processing of 16S rRNA. May interact with the 5'-terminal helix region of 16S rRNA. The protein is Ribosome-binding factor A of Shewanella oneidensis (strain ATCC 700550 / JCM 31522 / CIP 106686 / LMG 19005 / NCIMB 14063 / MR-1).